Consider the following 270-residue polypeptide: Secreted RxLR effector protein 149 (270 aa).

Residues 1-21 (MRNGVVLFGLFFIGYSSCVLA) form the signal peptide. The RxLR-dEER motif lies at 43 to 58 (RTLQADDPERILAEER).

Belongs to the RxLR effector family.

The protein resides in the secreted. The protein localises to the host nucleus. It localises to the host cytoplasm. In terms of biological role, secreted effector that completely suppresses the host cell death induced by cell death-inducing proteins. In Plasmopara viticola (Downy mildew of grapevine), this protein is Secreted RxLR effector protein 149.